Consider the following 340-residue polypeptide: Protein RecA (340 aa).

66–73 lines the ATP pocket; it reads GPESSGKT.

The protein belongs to the RecA family.

It localises to the cytoplasm. In terms of biological role, can catalyze the hydrolysis of ATP in the presence of single-stranded DNA, the ATP-dependent uptake of single-stranded DNA by duplex DNA, and the ATP-dependent hybridization of homologous single-stranded DNAs. It interacts with LexA causing its activation and leading to its autocatalytic cleavage. The polypeptide is Protein RecA (Rickettsia prowazekii (strain Madrid E)).